Reading from the N-terminus, the 134-residue chain is Small ribosomal subunit protein uS11 (134 aa).

The tract at residues 115 to 134 (TPIPHNGTRPPKKVLKRDLK) is disordered. Basic residues predominate over residues 124-134 (PPKKVLKRDLK).

It belongs to the universal ribosomal protein uS11 family. In terms of assembly, part of the 30S ribosomal subunit. Interacts with proteins S7 and S18. Binds to IF-3.

Located on the platform of the 30S subunit, it bridges several disparate RNA helices of the 16S rRNA. Forms part of the Shine-Dalgarno cleft in the 70S ribosome. In Mycoplasma mobile (strain ATCC 43663 / 163K / NCTC 11711) (Mesomycoplasma mobile), this protein is Small ribosomal subunit protein uS11.